A 55-amino-acid chain; its full sequence is Large ribosomal subunit protein bL33B (55 aa).

This sequence belongs to the bacterial ribosomal protein bL33 family.

The polypeptide is Large ribosomal subunit protein bL33B (Mycolicibacterium paratuberculosis (strain ATCC BAA-968 / K-10) (Mycobacterium paratuberculosis)).